Consider the following 647-residue polypeptide: Acetyl-coenzyme A synthetase (647 aa).

CoA-binding positions include 192-195 (RGGR), Thr-310, and Asn-334. ATP-binding positions include 386–388 (GEP), 410–415 (DTWWQT), Asp-499, and Arg-514. Ser-522 contributes to the CoA binding site. Residue Arg-525 participates in ATP binding. Residues Val-536, His-538, and Val-541 each contribute to the Mg(2+) site. Residue Arg-583 coordinates CoA. Lys-608 carries the post-translational modification N6-acetyllysine.

The protein belongs to the ATP-dependent AMP-binding enzyme family. The cofactor is Mg(2+). Post-translationally, acetylated. Deacetylation by the SIR2-homolog deacetylase activates the enzyme.

The enzyme catalyses acetate + ATP + CoA = acetyl-CoA + AMP + diphosphate. Catalyzes the conversion of acetate into acetyl-CoA (AcCoA), an essential intermediate at the junction of anabolic and catabolic pathways. AcsA undergoes a two-step reaction. In the first half reaction, AcsA combines acetate with ATP to form acetyl-adenylate (AcAMP) intermediate. In the second half reaction, it can then transfer the acetyl group from AcAMP to the sulfhydryl group of CoA, forming the product AcCoA. This is Acetyl-coenzyme A synthetase from Caulobacter vibrioides (strain ATCC 19089 / CIP 103742 / CB 15) (Caulobacter crescentus).